The sequence spans 389 residues: Chalcone synthase 5 (389 aa).

The active site involves C164.

Belongs to the thiolase-like superfamily. Chalcone/stilbene synthases family.

The catalysed reaction is (E)-4-coumaroyl-CoA + 3 malonyl-CoA + 3 H(+) = 2',4,4',6'-tetrahydroxychalcone + 3 CO2 + 4 CoA. Its pathway is secondary metabolite biosynthesis; flavonoid biosynthesis. The primary product of this enzyme is 4,2',4',6'-tetrahydroxychalcone (also termed naringenin-chalcone or chalcone) which can under specific conditions spontaneously isomerize into naringenin. The polypeptide is Chalcone synthase 5 (CHS5) (Trifolium subterraneum (Subterranean clover)).